Here is a 624-residue protein sequence, read N- to C-terminus: MSKSLPYSVKDIHYDNAKFRHRSPLKVFSQSLLTLSTKRNYASCSTGKFLILILFFGVACLMLMSKSPNESGLNEKGKVTFVGGLRLGGLLRKPPRLPPRLSPDEGQLRGSSTNGSTISNSDPKWAARQQSVKEAFDHAWSGYRKYAMGYDELMPISQKGVDGLGGLGATVVDALDTAMIMGLDNIVSEAGSWVETHLLERISQKGQVNLFETTIRVLGGLLSAYHLSGGEQGTVNMTHVGPKPVIYLNIAKDLADRLLSAFTSSPTPVPFCDVILHESTAHPAPGGASSTAEVASVQLEFNYLSSISGDPKYSTEAMKVLAHIKTLPKTEGLVPIYISPQTGDFVGENIRLGSRGDSYYEYLIKVWLQQGAKLNSNFTYLHDMYIEAMKGVRHLLVQNSIPKGLVFVGELPYGSKGEFSPKMDHLVCFLPGTLALGATKGLTKEQALKENLLSFEDLENLKLAEDLAKTCFEMYEVTATGLAPEIAYFHTKDYTEDGLDGGNKSSMYANDIIIKPADRHNLLRPETVESLFVLYRITKDTKYRDQGWQIFEAFEKYTKVKSGGYTSLDDVTEVPPHRRDKMETFFLGETLKYLYLLFGDDSVIPLDKFVFNTEAHPLPIRRNT.

Topologically, residues 1-43 (MSKSLPYSVKDIHYDNAKFRHRSPLKVFSQSLLTLSTKRNYAS) are cytoplasmic. Residues 44–64 (CSTGKFLILILFFGVACLMLM) form a helical; Signal-anchor for type II membrane protein membrane-spanning segment. Residues 65–624 (SKSPNESGLN…AHPLPIRRNT (560 aa)) lie on the Lumenal side of the membrane. Asn-69 and Asn-114 each carry an N-linked (GlcNAc...) asparagine glycan. The interval 91–123 (LRKPPRLPPRLSPDEGQLRGSSTNGSTISNSDP) is disordered. Residues 110-121 (GSSTNGSTISNS) are compositionally biased toward low complexity. The active-site Proton donor is Glu-212. The N-linked (GlcNAc...) asparagine glycan is linked to Asn-236. Asp-357 is an active-site residue. N-linked (GlcNAc...) asparagine glycosylation occurs at Asn-377. A disulfide bridge connects residues Cys-428 and Cys-471. The active-site Proton donor is Glu-485. A glycan (N-linked (GlcNAc...) asparagine) is linked at Asn-503. Residue Glu-526 is part of the active site. Thr-613 lines the Ca(2+) pocket.

It belongs to the glycosyl hydrolase 47 family. It depends on Ca(2+) as a cofactor. Requires Mn(2+) as cofactor. Mg(2+) is required as a cofactor. As to expression, expressed in flowers, siliques, stems, leaves, roots, stamens and sepals.

Its subcellular location is the golgi apparatus. It localises to the cis-Golgi network membrane. The enzyme catalyses N(4)-(alpha-D-Man-(1-&gt;2)-alpha-D-Man-(1-&gt;2)-alpha-D-Man-(1-&gt;3)-[alpha-D-Man-(1-&gt;2)-alpha-D-Man-(1-&gt;3)-[alpha-D-Man-(1-&gt;2)-alpha-D-Man-(1-&gt;6)]-alpha-D-Man-(1-&gt;6)]-beta-D-Man-(1-&gt;4)-beta-D-GlcNAc-(1-&gt;4)-beta-D-GlcNAc)-L-asparaginyl-[protein] (N-glucan mannose isomer 9A1,2,3B1,2,3) + 4 H2O = N(4)-(alpha-D-Man-(1-&gt;3)-[alpha-D-Man-(1-&gt;3)-[alpha-D-Man-(1-&gt;6)]-alpha-D-Man-(1-&gt;6)]-beta-D-Man-(1-&gt;4)-beta-D-GlcNAc-(1-&gt;4)-beta-D-GlcNAc)-L-asparaginyl-[protein] (N-glucan mannose isomer 5A1,2) + 4 beta-D-mannose. The catalysed reaction is N(4)-(alpha-D-Man-(1-&gt;2)-alpha-D-Man-(1-&gt;2)-alpha-D-Man-(1-&gt;3)-[alpha-D-Man-(1-&gt;3)-[alpha-D-Man-(1-&gt;2)-alpha-D-Man-(1-&gt;6)]-alpha-D-Man-(1-&gt;6)]-beta-D-Man-(1-&gt;4)-beta-D-GlcNAc-(1-&gt;4)-beta-D-GlcNAc)-L-asparaginyl-[protein] (N-glucan mannose isomer 8A1,2,3B1,3) + 3 H2O = N(4)-(alpha-D-Man-(1-&gt;3)-[alpha-D-Man-(1-&gt;3)-[alpha-D-Man-(1-&gt;6)]-alpha-D-Man-(1-&gt;6)]-beta-D-Man-(1-&gt;4)-beta-D-GlcNAc-(1-&gt;4)-beta-D-GlcNAc)-L-asparaginyl-[protein] (N-glucan mannose isomer 5A1,2) + 3 beta-D-mannose. It carries out the reaction N(4)-(alpha-D-Man-(1-&gt;2)-alpha-D-Man-(1-&gt;2)-alpha-D-Man-(1-&gt;3)-[alpha-D-Man-(1-&gt;2)-alpha-D-Man-(1-&gt;3)-[alpha-D-Man-(1-&gt;2)-alpha-D-Man-(1-&gt;6)]-alpha-D-Man-(1-&gt;6)]-beta-D-Man-(1-&gt;4)-beta-D-GlcNAc-(1-&gt;4)-beta-D-GlcNAc)-L-asparaginyl-[protein] (N-glucan mannose isomer 9A1,2,3B1,2,3) + H2O = N(4)-(alpha-D-Man-(1-&gt;2)-alpha-D-Man-(1-&gt;2)-alpha-D-Man-(1-&gt;3)-[alpha-D-Man-(1-&gt;3)-[alpha-D-Man-(1-&gt;2)-alpha-D-Man-(1-&gt;6)]-alpha-D-Man-(1-&gt;6)]-beta-D-Man-(1-&gt;4)-beta-D-GlcNAc-(1-&gt;4)-beta-D-GlcNAc)-L-asparaginyl-[protein] (N-glucan mannose isomer 8A1,2,3B1,3) + beta-D-mannose. It participates in protein modification; protein glycosylation. Inhibited by kifunensine and 1-deoxymannojirimycin, but not by swainsonine. Functionally, class I alpha-mannosidase essential for early N-glycan processing. Removes preferentially alpha-1,2-linked mannose residues from Man(9)GlcNAc(2) to produce Man(8)GlcNAc(2). Involved in root development and cell wall biosynthesis. This is Mannosyl-oligosaccharide 1,2-alpha-mannosidase MNS3 (MNS3) from Arabidopsis thaliana (Mouse-ear cress).